A 159-amino-acid chain; its full sequence is Endoribonuclease YbeY (159 aa).

Zn(2+)-binding residues include H126, H130, and H136.

The protein belongs to the endoribonuclease YbeY family. Zn(2+) serves as cofactor.

The protein localises to the cytoplasm. In terms of biological role, single strand-specific metallo-endoribonuclease involved in late-stage 70S ribosome quality control and in maturation of the 3' terminus of the 16S rRNA. The polypeptide is Endoribonuclease YbeY (Thermodesulfovibrio yellowstonii (strain ATCC 51303 / DSM 11347 / YP87)).